The following is a 323-amino-acid chain: Dolichyl-phosphate beta-glucosyltransferase ALG5A (323 aa).

The Lumenal portion of the chain corresponds to 1-5 (MKFWR). The chain crosses the membrane as a helical span at residues 6–26 (FVQILFFLGVAAVGLVVAVMI). At 27–323 (ANADDTTLFD…GAWKIRDRRH (297 aa)) the chain is on the cytoplasmic side.

It belongs to the glycosyltransferase 2 family.

It is found in the endoplasmic reticulum membrane. It catalyses the reaction a di-trans,poly-cis-dolichyl phosphate + UDP-alpha-D-glucose = a di-trans,poly-cis-dolichyl beta-D-glucosyl phosphate + UDP. The protein operates within protein modification; protein glycosylation. Functionally, dolichyl-phosphate beta-glucosyltransferase involved in the glycosylation of glycoproteins through the synthesis of dolichyl beta-D-glucosyl phosphate which serves as a sugar donor for transfer of three glucose residues to the Man-9-GlcNAc-2-PP-dolichol precursor to N-glycans. This is Dolichyl-phosphate beta-glucosyltransferase ALG5A from Trichomonas vaginalis (strain ATCC PRA-98 / G3).